The primary structure comprises 437 residues: Phosphoribosylamine--glycine ligase (437 aa).

An ATP-grasp domain is found at 110–322 (KNLLRSADIP…LVEVMQAVVD (213 aa)). Residue 142–203 (EPTDPVNVVV…EERLTGPEVS (62 aa)) coordinates ATP. Mg(2+) contacts are provided by Glu-292 and Asn-294.

This sequence belongs to the GARS family. Mg(2+) serves as cofactor. Mn(2+) is required as a cofactor.

The catalysed reaction is 5-phospho-beta-D-ribosylamine + glycine + ATP = N(1)-(5-phospho-beta-D-ribosyl)glycinamide + ADP + phosphate + H(+). The protein operates within purine metabolism; IMP biosynthesis via de novo pathway; N(1)-(5-phospho-D-ribosyl)glycinamide from 5-phospho-alpha-D-ribose 1-diphosphate: step 2/2. This Rhodopirellula baltica (strain DSM 10527 / NCIMB 13988 / SH1) protein is Phosphoribosylamine--glycine ligase.